Here is a 202-residue protein sequence, read N- to C-terminus: Ig delta chain C region (202 aa).

The disordered stretch occupies residues 32-58; sequence KSKTFKLPETRNSQSSKKANPTPQAKN. Over residues 41-56 the composition is skewed to polar residues; the sequence is TRNSQSSKKANPTPQA. Residues 66–178 enclose the Ig-like domain; it reads PTATKNIVGA…TKLNASKSLE (113 aa).

The polypeptide is Ig delta chain C region (Rattus norvegicus (Rat)).